A 2087-amino-acid chain; its full sequence is Rho GTPase-activating protein 32 (2087 aa).

In terms of domain architecture, PX; atypical spans 131 to 245 (GSIQLSLSEE…LTWMEIDNKG (115 aa)). Residues 259 to 321 (PAVGAAHVIK…PGHCVELINQ (63 aa)) enclose the SH3 domain. The Rho-GAP domain maps to 372–567 (CDLGEHLLNS…FILNHVDVLF (196 aa)). Phosphoserine occurs at positions 706, 709, 732, and 738. Residues 818-858 (FLDSPGYSKDKPSANKKDAETGSSQCQTPGSTASSEPVSPL) form a disordered region. Basic and acidic residues predominate over residues 825–837 (SKDKPSANKKDAE). Over residues 838-854 (TGSSQCQTPGSTASSEP) the composition is skewed to polar residues. A phosphoserine mark is found at serine 852, serine 856, and serine 892. Over residues 927 to 938 (SNTTAQNASSST) the composition is skewed to low complexity. Disordered regions lie at residues 927-1038 (SNTT…PPKN), 1103-1143 (PAEQ…EQHH), and 1169-1257 (VPLD…ENTS). At serine 952 the chain carries Phosphoserine. Composition is skewed to low complexity over residues 994-1005 (SVSSSQSKAVAS) and 1019-1029 (QDSVPVSSVSL). Polar residues predominate over residues 1124–1138 (TTATGDPTHSNTTES). The segment covering 1172-1182 (DSEKSDDHVSF) has biased composition (basic and acidic residues). The span at 1188-1203 (GKNSMPTVSFLDQDQS) shows a compositional bias: polar residues. Phosphoserine is present on serine 1203. Residues 1222 to 1232 (DKLHHPLEFAD) show a composition bias toward basic and acidic residues. Residues 1391 to 1711 (RVPLLHLRAE…YSYAGLAPRP (321 aa)) are interaction with GAB2. Arginine 1523 and arginine 1533 each carry asymmetric dimethylarginine. The residue at position 1585 (serine 1585) is a Phosphoserine. Positions 1685–2087 (PNRDFAFYNP…QHPETQIHAE (403 aa)) are interaction with FYN. The interval 1798 to 1896 (PGKTGLLSVA…QFCESKNGPP (99 aa)) is disordered. Residues 1823 to 1838 (GEDRFYRRHPEAEMDR) show a composition bias toward basic and acidic residues. Positions 1847-1862 (STQPEKPSLPQKQSSL) are enriched in polar residues. Positions 1875–1889 (PEHRAHQEASHRQFC) are enriched in basic and acidic residues. Residue arginine 2037 is modified to Omega-N-methylarginine.

It belongs to the PX domain-containing GAP family. In terms of assembly, interacts with NTRK1 (via cytoplasmic domain); the interaction is independent of the phosphorylation state of NTRK1. Interacts with SHC3 (via SH2 domain). Interacts with RASA1 (via SH3 domain); the interaction is necessary for the Ras activation and cell transforming activities of ARHGAP32. Interacts with GAB1 and GAB2. Interacts with CRK and CRKL. Found in a complex with CRKL and BCAR1; upon EGF stimulation BCAR1 may be replaced by EGFR. Interacts with NCK1 (via SH3 domain); NCK1 recruits phosphorylated BCAR1 to the complex. Isoform 2 interacts with FYN; the interaction appears to be dependent on tyrosine phosphorylation of ARHGAP32. Interacts with EGFR; the interaction requires EGF stimulation and is increased by SHC3. Interacts with CDC42; the interaction requires constitutively active CDC42. Interacts with CTNNB1. Interacts with GRIN2B. Interacts with DLG4 and CDH2. Interacts with GPHN. In terms of processing, isoform 2 is phosphorylated on multiple tyrosine residues by FYN. Phosphorylated tyrosine residues undergo dephosphorylation after stimulation of NMDA receptors. Phosphorylated in vitro by CaMK2 in the presence of calmodulin and calcium; which inhibits GAP activity. Isoform 1 and isoform 2 are highly expressed in brain and testis. Isoform 1 is also expressed in other tissues such as lung, liver and spleen.

The protein localises to the postsynaptic density. It localises to the cell projection. The protein resides in the dendritic spine. Its subcellular location is the cytoplasm. It is found in the cell cortex. The protein localises to the endosome membrane. It localises to the golgi apparatus membrane. The protein resides in the endoplasmic reticulum membrane. Its subcellular location is the membrane. GTPase-activating protein (GAP) promoting GTP hydrolysis on RHOA, CDC42 and RAC1 small GTPases. May be involved in the differentiation of neuronal cells during the formation of neurite extensions. Involved in NMDA receptor activity-dependent actin reorganization in dendritic spines. May mediate cross-talks between Ras- and Rho-regulated signaling pathways in cell growth regulation. Isoform 2 has higher GAP activity. This Homo sapiens (Human) protein is Rho GTPase-activating protein 32 (ARHGAP32).